A 71-amino-acid polypeptide reads, in one-letter code: MFTLKKSLLLLFFLGTINLSLCEQERNADEEERRDDSDKRDVEVEKRFLSTLLNVASKVVPTLFCKITKKC.

Positions 1–22 are cleaved as a signal peptide; the sequence is MFTLKKSLLLLFFLGTINLSLC. Residues 23–45 constitute a propeptide, removed in mature form; that stretch reads EQERNADEEERRDDSDKRDVEVE. A disulfide bridge links C65 with C71.

It belongs to the frog skin active peptide (FSAP) family. Brevinin subfamily. Expressed by the skin glands.

The protein resides in the secreted. Its function is as follows. Antimicrobial peptide active against a variety of Gram-positive and some Gram-negative bacterial strains. Has antifungal activity against C.albicans ATCC 10231 and a slime mold isolate. Has hemolytic activity against human erythrocytes. This Amolops chunganensis (Chungan torrent frog) protein is Brevinin-1CG4.